We begin with the raw amino-acid sequence, 129 residues long: Small ribosomal subunit protein uS11 (129 aa).

Belongs to the universal ribosomal protein uS11 family. As to quaternary structure, part of the 30S ribosomal subunit. Interacts with proteins S7 and S18. Binds to IF-3.

In terms of biological role, located on the platform of the 30S subunit, it bridges several disparate RNA helices of the 16S rRNA. Forms part of the Shine-Dalgarno cleft in the 70S ribosome. The chain is Small ribosomal subunit protein uS11 from Bacillus mycoides (strain KBAB4) (Bacillus weihenstephanensis).